The following is a 205-amino-acid chain: Holliday junction branch migration complex subunit RuvA (205 aa).

A domain I region spans residues 1-64 (MIGRLRGTLA…EDAHLLYGFH (64 aa)). A domain II region spans residues 65–143 (EKRERELFRE…AWETSPAMFT (79 aa)). The segment at 144 to 153 (LVSDGPVPVS) is flexible linker. Residues 154–205 (GASTAEADAVSALVSLGYKPQEASKAVSAIKDKAGLSSEELIRRSLKGMITK) are domain III.

Belongs to the RuvA family. Homotetramer. Forms an RuvA(8)-RuvB(12)-Holliday junction (HJ) complex. HJ DNA is sandwiched between 2 RuvA tetramers; dsDNA enters through RuvA and exits via RuvB. An RuvB hexamer assembles on each DNA strand where it exits the tetramer. Each RuvB hexamer is contacted by two RuvA subunits (via domain III) on 2 adjacent RuvB subunits; this complex drives branch migration. In the full resolvosome a probable DNA-RuvA(4)-RuvB(12)-RuvC(2) complex forms which resolves the HJ.

Its subcellular location is the cytoplasm. Functionally, the RuvA-RuvB-RuvC complex processes Holliday junction (HJ) DNA during genetic recombination and DNA repair, while the RuvA-RuvB complex plays an important role in the rescue of blocked DNA replication forks via replication fork reversal (RFR). RuvA specifically binds to HJ cruciform DNA, conferring on it an open structure. The RuvB hexamer acts as an ATP-dependent pump, pulling dsDNA into and through the RuvAB complex. HJ branch migration allows RuvC to scan DNA until it finds its consensus sequence, where it cleaves and resolves the cruciform DNA. The chain is Holliday junction branch migration complex subunit RuvA from Pseudomonas putida (strain W619).